Here is a 200-residue protein sequence, read N- to C-terminus: Holliday junction branch migration complex subunit RuvA (200 aa).

The segment at 1–64 (MFTYFRGELI…EDLMQLFGFL (64 aa)) is domain I. The segment at 65–143 (EEEERQLFRL…KLRPSGGTKS (79 aa)) is domain II. The flexible linker stretch occupies residues 144 to 148 (VSRLS). Residues 148–200 (SESSMRDDAVNALVTLGFLRSVAQKAVTESLTSLRNPQVEDLVRDALLTIRTP) are domain III.

It belongs to the RuvA family. In terms of assembly, homotetramer. Forms an RuvA(8)-RuvB(12)-Holliday junction (HJ) complex. HJ DNA is sandwiched between 2 RuvA tetramers; dsDNA enters through RuvA and exits via RuvB. An RuvB hexamer assembles on each DNA strand where it exits the tetramer. Each RuvB hexamer is contacted by two RuvA subunits (via domain III) on 2 adjacent RuvB subunits; this complex drives branch migration. In the full resolvosome a probable DNA-RuvA(4)-RuvB(12)-RuvC(2) complex forms which resolves the HJ.

The protein localises to the cytoplasm. In terms of biological role, the RuvA-RuvB-RuvC complex processes Holliday junction (HJ) DNA during genetic recombination and DNA repair, while the RuvA-RuvB complex plays an important role in the rescue of blocked DNA replication forks via replication fork reversal (RFR). RuvA specifically binds to HJ cruciform DNA, conferring on it an open structure. The RuvB hexamer acts as an ATP-dependent pump, pulling dsDNA into and through the RuvAB complex. HJ branch migration allows RuvC to scan DNA until it finds its consensus sequence, where it cleaves and resolves the cruciform DNA. This is Holliday junction branch migration complex subunit RuvA from Chlorobium phaeobacteroides (strain BS1).